We begin with the raw amino-acid sequence, 336 residues long: Fructose-1,6-bisphosphatase class 1 (336 aa).

Residues Glu-92, Asp-115, Leu-117, and Asp-118 each contribute to the Mg(2+) site. Residues Asp-118 to Ser-121, Asn-211, Tyr-244, Tyr-262 to Tyr-264, and Lys-274 each bind substrate. Glu-280 is a Mg(2+) binding site.

The protein belongs to the FBPase class 1 family. Homotetramer. The cofactor is Mg(2+).

The protein localises to the cytoplasm. The enzyme catalyses beta-D-fructose 1,6-bisphosphate + H2O = beta-D-fructose 6-phosphate + phosphate. The protein operates within carbohydrate biosynthesis; gluconeogenesis. The protein is Fructose-1,6-bisphosphatase class 1 of Vibrio cholerae serotype O1 (strain ATCC 39541 / Classical Ogawa 395 / O395).